The sequence spans 677 residues: Transketolase (677 aa).

His-27 serves as a coordination point for substrate. Thiamine diphosphate is bound by residues His-66 and 114-116 (GPL). Asp-155 contacts Mg(2+). 2 residues coordinate thiamine diphosphate: Gly-156 and Asn-185. Residues Asn-185 and Ile-187 each contribute to the Mg(2+) site. Substrate contacts are provided by His-261, Arg-356, and Ser-383. Residue His-261 coordinates thiamine diphosphate. Residues Glu-415 and Phe-442 each contribute to the thiamine diphosphate site. Catalysis depends on Glu-415, which acts as the Proton donor. 3 residues coordinate substrate: His-466, Asp-474, and Arg-525.

It belongs to the transketolase family. As to quaternary structure, homodimer. Mg(2+) is required as a cofactor. Requires Ca(2+) as cofactor. It depends on Mn(2+) as a cofactor. The cofactor is Co(2+). Thiamine diphosphate serves as cofactor.

The catalysed reaction is D-sedoheptulose 7-phosphate + D-glyceraldehyde 3-phosphate = aldehydo-D-ribose 5-phosphate + D-xylulose 5-phosphate. Its function is as follows. Catalyzes the transfer of a two-carbon ketol group from a ketose donor to an aldose acceptor, via a covalent intermediate with the cofactor thiamine pyrophosphate. In Scheffersomyces stipitis (strain ATCC 58785 / CBS 6054 / NBRC 10063 / NRRL Y-11545) (Yeast), this protein is Transketolase (TKT).